Reading from the N-terminus, the 161-residue chain is Anaerobic nitrite reductase GLB1 (161 aa).

The region spanning 9 to 157 (VFTEEQEALV…LVAAIKSEMK (149 aa)) is the Globin domain. Residues 42-46 (EIAPS) carry the Homodimerization motif. Residues Ser52, Lys66, His70, Arg100, and His105 each coordinate heme b. The Homodimerization motif lies at 112-123 (NEHFETRFALLE).

It belongs to the plant globin family. In terms of assembly, homodimer. The cofactor is heme b. Root specific.

It localises to the cytoplasm. The protein localises to the nucleus. The enzyme catalyses Fe(III)-heme b-[protein] + nitric oxide + H2O = Fe(II)-heme b-[protein] + nitrite + 2 H(+). In terms of biological role, phytoglobin that reduces nitrite to nitric oxide (NO) under anoxic conditions (e.g. during flooding or in waterlogged soil) and upon root nodulation. Required for general plant development and during nodulation, especially for the onset of symbiosis. Monitors nitric oxide (NO) levels during early phase of the nitrogen-fixing symbiosis and buffers oxygen in functioning nodules. May not function as an oxygen storage or transport protein. Has an unusually high affinity for O(2) through a hexacoordinate heme iron because of a very low dissociation constant. This Trema tomentosum (Peach-leaf poison-bush) protein is Anaerobic nitrite reductase GLB1 (GLB1).